The chain runs to 296 residues: Pantothenate synthetase (296 aa).

ATP is bound at residue methionine 30 to histidine 37. The active-site Proton donor is the histidine 37. Glutamine 61 serves as a coordination point for (R)-pantoate. Position 61 (glutamine 61) interacts with beta-alanine. Glycine 149–aspartate 152 lines the ATP pocket. Glutamine 155 provides a ligand contact to (R)-pantoate. Residues valine 178 and methionine 186 to arginine 189 contribute to the ATP site.

The protein belongs to the pantothenate synthetase family. In terms of assembly, homodimer.

Its subcellular location is the cytoplasm. It carries out the reaction (R)-pantoate + beta-alanine + ATP = (R)-pantothenate + AMP + diphosphate + H(+). Its pathway is cofactor biosynthesis; (R)-pantothenate biosynthesis; (R)-pantothenate from (R)-pantoate and beta-alanine: step 1/1. In terms of biological role, catalyzes the condensation of pantoate with beta-alanine in an ATP-dependent reaction via a pantoyl-adenylate intermediate. The polypeptide is Pantothenate synthetase (Vibrio atlanticus (strain LGP32) (Vibrio splendidus (strain Mel32))).